The sequence spans 235 residues: Triosephosphate isomerase (235 aa).

7–9 provides a ligand contact to substrate; the sequence is NFK. Catalysis depends on H92, which acts as the Electrophile. The active-site Proton acceptor is the E161. Substrate contacts are provided by G167 and S197.

Belongs to the triosephosphate isomerase family. As to quaternary structure, homodimer.

It localises to the cytoplasm. It catalyses the reaction D-glyceraldehyde 3-phosphate = dihydroxyacetone phosphate. It functions in the pathway carbohydrate biosynthesis; gluconeogenesis. Its pathway is carbohydrate degradation; glycolysis; D-glyceraldehyde 3-phosphate from glycerone phosphate: step 1/1. Its function is as follows. Involved in the gluconeogenesis. Catalyzes stereospecifically the conversion of dihydroxyacetone phosphate (DHAP) to D-glyceraldehyde-3-phosphate (G3P). This Helicobacter hepaticus (strain ATCC 51449 / 3B1) protein is Triosephosphate isomerase.